We begin with the raw amino-acid sequence, 397 residues long: Potassium channel subfamily K member 4 (397 aa).

Residues 1-3 (MRS) are Cytoplasmic-facing. A helical transmembrane segment spans residues 4 to 24 (TTLLALLALVLLYLVSGALVF). The Extracellular portion of the chain corresponds to 25–88 (QALEQPHEQQ…WTNSSNHSSA (64 aa)). A glycan (N-linked (GlcNAc...) asparagine) is linked at Asn-81. Positions 89 to 103 (WNLGSAFFFSGTIIT) form an intramembrane region, helical. Residues Thr-104, Ile-105, Gly-106, and Tyr-107 each coordinate K(+). A selectivity filter 1 region spans residues 104–109 (TIGYGN). An intramembrane segment occupies 104 to 110 (TIGYGNI). Over 111–118 (ALHTDAGR) the chain is Extracellular. The chain crosses the membrane as a helical span at residues 119 to 151 (LFCIFYALVGIPLFGMLLAGVGDRLGSSLRRGI). At 152 to 173 (GHIEAVFLKWHVPPGLVRMLSA) the chain is on the cytoplasmic side. Residues 174 to 195 (VLFLLIGCLLFVLTPTFVFSYM) form a helical membrane-spanning segment. Residues 196-200 (ESWSK) are Extracellular-facing. Positions 201-214 (LEAIYFVIVTLTTV) form an intramembrane region, helical. K(+) is bound by residues Thr-213, Val-214, Gly-215, and Phe-216. A selectivity filter 2 region spans residues 213 to 218 (TVGFGD). Residues 215 to 220 (GFGDYV) lie within the membrane without spanning it. Residues 221–234 (PGDGTGQNSPAYQP) lie on the Extracellular side of the membrane. The chain crosses the membrane as a helical span at residues 235–261 (LVWFWILFGLAYFASVLTTIGNWLRAV). At 262 to 397 (SRRTRAEMGG…GRLRDKAVPV (136 aa)) the chain is on the cytoplasmic side. Polar residues predominate over residues 282-292 (TVTARVTQRTG). The segment at 282 to 397 (TVTARVTQRT…GRLRDKAVPV (116 aa)) is disordered. Over residues 369 to 388 (PRGRRRPNPTKKPSRPRGPG) the composition is skewed to basic residues.

This sequence belongs to the two pore domain potassium channel (TC 1.A.1.8) family. In terms of assembly, homodimer; disulfide-linked. Forms heterodimers with other 2-pore domain K(+) channel subunits, such as KCNK2 and KCNK10. As to expression, detected in brain, and at much lower levels in liver, skeletal muscle and testis.

Its subcellular location is the cell membrane. The protein resides in the cell projection. It localises to the axon. The enzyme catalyses K(+)(in) = K(+)(out). The catalysed reaction is Rb(+)(in) = Rb(+)(out). It catalyses the reaction Cs(+)(in) = Cs(+)(out). Activated by various stimuli including intracellular basic pH, mechanical stretch and heat and polyunsaturated fatty acids such as arachidonic acid. In terms of biological role, k(+) channel that conducts voltage-dependent outward rectifying currents upon membrane depolarization. Voltage sensing is coupled to K(+) electrochemical gradient in an 'ion flux gating' mode where outward but not inward ion flow opens the gate. Converts to voltage-independent 'leak' conductance mode upon stimulation by various stimuli including mechanical membrane stretch, basic pH, heat and lipids. Homo- and heterodimerizes to form functional channels with distinct regulatory and gating properties. At trigeminal A-beta afferent nerves, the heterodimer of KCNK2/TREK-1 and KCNK4/TRAAK is mostly coexpressed at nodes of Ranvier where it conducts voltage-independent mechanosensitive and thermosensitive currents, allowing rapid action potential repolarization, high speed and high frequence saltatory conduction on myelinated nerves to ensure prompt sensory responses. Permeable to other monovalent cations such as Rb(+) and Cs(+). This Rattus norvegicus (Rat) protein is Potassium channel subfamily K member 4.